A 118-amino-acid polypeptide reads, in one-letter code: Basic phospholipase A2 acanthin-2 (118 aa).

Cystine bridges form between Cys11–Cys71, Cys27–Cys117, Cys29–Cys45, Cys44–Cys98, Cys51–Cys91, Cys60–Cys84, and Cys78–Cys89. Residues Tyr28, Gly30, and Gly32 each contribute to the Ca(2+) site. His48 is a catalytic residue. Asp49 is a binding site for Ca(2+). Residue Asp92 is part of the active site.

Ca(2+) serves as cofactor. As to expression, expressed by the venom gland.

The protein resides in the secreted. It catalyses the reaction a 1,2-diacyl-sn-glycero-3-phosphocholine + H2O = a 1-acyl-sn-glycero-3-phosphocholine + a fatty acid + H(+). Functionally, snake venom phospholipase A2 (PLA2) that potently inhibits ADP-(IC(50)=12 nM) and collagen-induced (IC(50)=4 nM) platelet aggregation when tested on human whole blood. PLA2 catalyzes the calcium-dependent hydrolysis of the 2-acyl groups in 3-sn-phosphoglycerides. The polypeptide is Basic phospholipase A2 acanthin-2 (Acanthophis antarcticus (Common death adder)).